We begin with the raw amino-acid sequence, 469 residues long: Glutamate--tRNA ligase (469 aa).

Positions proline 9–glycine 19 match the 'HIGH' region motif. Residues cysteine 98, cysteine 100, cysteine 125, and aspartate 127 each contribute to the Zn(2+) site. Residues lysine 236 to arginine 240 carry the 'KMSKS' region motif. Lysine 239 contacts ATP.

Belongs to the class-I aminoacyl-tRNA synthetase family. Glutamate--tRNA ligase type 1 subfamily. Monomer. Zn(2+) is required as a cofactor.

Its subcellular location is the cytoplasm. It carries out the reaction tRNA(Glu) + L-glutamate + ATP = L-glutamyl-tRNA(Glu) + AMP + diphosphate. In terms of biological role, catalyzes the attachment of glutamate to tRNA(Glu) in a two-step reaction: glutamate is first activated by ATP to form Glu-AMP and then transferred to the acceptor end of tRNA(Glu). This chain is Glutamate--tRNA ligase, found in Shewanella sp. (strain ANA-3).